The sequence spans 344 residues: Arginine N-succinyltransferase (344 aa).

Position 125 (leucine 125) interacts with succinyl-CoA. Histidine 229 (proton donor) is an active-site residue.

The protein belongs to the arginine N-succinyltransferase family.

The catalysed reaction is succinyl-CoA + L-arginine = N(2)-succinyl-L-arginine + CoA + H(+). Its pathway is amino-acid degradation; L-arginine degradation via AST pathway; L-glutamate and succinate from L-arginine: step 1/5. Catalyzes the transfer of succinyl-CoA to arginine to produce N(2)-succinylarginine. The protein is Arginine N-succinyltransferase of Shigella flexneri serotype 5b (strain 8401).